Consider the following 293-residue polypeptide: Ribosomal protein L11 methyltransferase (293 aa).

Threonine 145, glycine 166, aspartate 188, and asparagine 230 together coordinate S-adenosyl-L-methionine.

Belongs to the methyltransferase superfamily. PrmA family.

It is found in the cytoplasm. It carries out the reaction L-lysyl-[protein] + 3 S-adenosyl-L-methionine = N(6),N(6),N(6)-trimethyl-L-lysyl-[protein] + 3 S-adenosyl-L-homocysteine + 3 H(+). Methylates ribosomal protein L11. The sequence is that of Ribosomal protein L11 methyltransferase from Yersinia pseudotuberculosis serotype O:3 (strain YPIII).